Reading from the N-terminus, the 137-residue chain is MAKKTITRIAKINLLGGQAKPGPALASVGINMGEFTKQFNEKTKDKQGEMIPCVITAYNDKSFDFILKTTPVSILLKQAAKLEKGAKNAKTIVGKITMAKAKEIAQYKLVDLNANTVEAALKMVLGTAKQMGIEVIE.

Belongs to the universal ribosomal protein uL11 family. In terms of assembly, part of the ribosomal stalk of the 50S ribosomal subunit. Interacts with L10 and the large rRNA to form the base of the stalk. L10 forms an elongated spine to which L12 dimers bind in a sequential fashion forming a multimeric L10(L12)X complex. One or more lysine residues are methylated.

Functionally, forms part of the ribosomal stalk which helps the ribosome interact with GTP-bound translation factors. This Mycoplasma pneumoniae (strain ATCC 29342 / M129 / Subtype 1) (Mycoplasmoides pneumoniae) protein is Large ribosomal subunit protein uL11.